A 775-amino-acid polypeptide reads, in one-letter code: MQSRLMPSGGPGRRWAFLRVPSTPQRRAFASTRFYFQDIFQSQLEDPSSAAVYSSLQASRAVPQTLTEKIVQKYSVGLAKDKFVKSGDYVTISPHRCMTHDNSWPVALKFMSIGATKLHDPKQIVMTLDHDVQNKSEKNLQKYRQIEDFAKHQGVEFYPAGRGIGHQVMVEEGYAWPGTLVVASDSHSNMYGGVGCLGTPIVRTDGASIWATGKTWWQIPPVAKVTLTGVLPPGVTGKDVIVALCGLFDKDDVLNHAIEFTGPEETMRSLSVDARLTIANMTTEWGALSGLFPIDNVLKGWLKGKATTAAMGLAEGPFKTLAPQHFTHPLLEQLFANPLTADKGAKYAKELFLDLSTLSPYVSGPNSVKVATPLKDLEAQNIKVNKAYLVSCTNSRASDIAAAARVFKEAAEKNGGKVPKIADGVEFYVAAASIPEQLAAEEAGDWQALLDAGATPLLPGCAQCIGLGTGLLEAGEVGISASNRNFKGRMGSTDAKAYLGSPEVVAASALTGKLSGPGWYQAPEGLTEVVRGEGDGIREEDRMLTAEQALEKLIGQIDNLVADGEKQFAPEESEESSGDSLTEVYPGFPERVSGEIVFCDADNINTDGIYPGKYTYQDDVSQETMAQVCMSNYDAQFSSIAKEGDILVTGFNFGCGSSREQAATAILAKKIPLVVSGSFGNIFSRNSINNALMGLEVPRLINRLRESFSGEGSDKSLTRRTGWTLTWDVRRSRIEVQEGENGPKWTHQVGELPPNVQEIIAKGGLEKWVKNEIGA.

The N-terminal 29 residues, 1-29 (MQSRLMPSGGPGRRWAFLRVPSTPQRRAF), are a transit peptide targeting the mitochondrion. Cys392, Cys461, and Cys464 together coordinate [4Fe-4S] cluster.

This sequence belongs to the aconitase/IPM isomerase family. [4Fe-4S] cluster is required as a cofactor.

The protein resides in the mitochondrion. The catalysed reaction is (2R,3S)-homoisocitrate = cis-homoaconitate + H2O. Its pathway is amino-acid biosynthesis; L-lysine biosynthesis via AAA pathway; L-alpha-aminoadipate from 2-oxoglutarate: step 3/5. Functionally, catalyzes the reversible hydration of cis-homoaconitate to (2R,3S)-homoisocitrate, a step in the alpha-aminoadipate pathway for lysine biosynthesis. This is Homoaconitase, mitochondrial (lys4) from Aspergillus oryzae (strain ATCC 42149 / RIB 40) (Yellow koji mold).